The sequence spans 109 residues: Large ribosomal subunit protein uL24 (109 aa).

It belongs to the universal ribosomal protein uL24 family. In terms of assembly, part of the 50S ribosomal subunit.

Its function is as follows. One of two assembly initiator proteins, it binds directly to the 5'-end of the 23S rRNA, where it nucleates assembly of the 50S subunit. Functionally, one of the proteins that surrounds the polypeptide exit tunnel on the outside of the subunit. The protein is Large ribosomal subunit protein uL24 of Rickettsia bellii (strain RML369-C).